The chain runs to 304 residues: D-alanine--D-alanine ligase (304 aa).

The 197-residue stretch at 103–299 (KLIWQALGLP…FADLCIEILK (197 aa)) folds into the ATP-grasp domain. Position 129–184 (129–184 (EEKLGLPMFVKPAAEGSSVGVVKVKGKGRLKSVYEELKHFQGEIIAERFIGGGEYS)) interacts with ATP. Residues Asp-253, Glu-266, and Asn-268 each coordinate Mg(2+).

The protein belongs to the D-alanine--D-alanine ligase family. It depends on Mg(2+) as a cofactor. Mn(2+) serves as cofactor.

The protein resides in the cytoplasm. It catalyses the reaction 2 D-alanine + ATP = D-alanyl-D-alanine + ADP + phosphate + H(+). It functions in the pathway cell wall biogenesis; peptidoglycan biosynthesis. In terms of biological role, cell wall formation. In Neisseria meningitidis serogroup A / serotype 4A (strain DSM 15465 / Z2491), this protein is D-alanine--D-alanine ligase.